The primary structure comprises 160 residues: Nucleotide-binding protein VF_1240 (160 aa).

Belongs to the YajQ family.

Its function is as follows. Nucleotide-binding protein. The protein is Nucleotide-binding protein VF_1240 of Aliivibrio fischeri (strain ATCC 700601 / ES114) (Vibrio fischeri).